The primary structure comprises 486 residues: H2.0-like homeobox protein (486 aa).

Disordered regions lie at residues 83-173 (ASFQ…SSKD) and 330-486 (KWRH…LGGL). The segment covering 125–135 (QQQQQQQQPQQ) has biased composition (low complexity). The segment at residues 276–335 (RSWSRAVFSNLQRKGLEKRFEIQKYVTKPDRKQLAAMLGLTDAQVKVWFQNRRMKWRHSK) is a DNA-binding region (homeobox). Composition is skewed to basic and acidic residues over residues 334–349 (SKEAQAQKDKDKEAGE) and 363–372 (EERSPSRSEG). Positions 373-383 (EAESESSDPES) are enriched in acidic residues. The span at 390-401 (DTERTEGTERSL) shows a compositional bias: basic and acidic residues. The span at 409–420 (ASAAGALLAASS) shows a compositional bias: low complexity. Positions 421 to 440 (GGSGGSGGGGGGGFNFGGLS) are enriched in gly residues. Residues 441–474 (SGSTTSAGSSGSHSSGGASELLPAPQPSLSSAPK) show a composition bias toward low complexity. A compositionally biased stretch (pro residues) spans 475 to 486 (SPEPVPAPLGGL).

It belongs to the H2.0 homeobox family.

Its subcellular location is the nucleus. In terms of biological role, transcription factor required for TBX21/T-bet-dependent maturation of Th1 cells as well as maintenance of Th1-specific gene expression. Involved in embryogenesis and hematopoiesis. The polypeptide is H2.0-like homeobox protein (HLX) (Bos taurus (Bovine)).